Reading from the N-terminus, the 767-residue chain is General transcription and DNA repair factor IIH helicase/translocase subunit XPB1 (767 aa).

A disordered region spans residues 1–51 (MGNGERGRPNKKMKYGGKDDQKMKNIQNAEDYYDDADEDSRDGEGEEKKRD). Over residues 31 to 41 (DYYDDADEDSR) the composition is skewed to acidic residues. The segment covering 42 to 51 (DGEGEEKKRD) has biased composition (basic and acidic residues). A Helicase ATP-binding domain is found at 293–455 (MFGNGRARSG…DLNFLIGPKL (163 aa)). 306-313 (LPCGAGKS) is an ATP binding site. The DEVH box motif lies at 408 to 411 (DEVH). A Helicase C-terminal domain is found at 510-676 (RACEFLIRFH…SLPPPDAGSS (167 aa)). The disordered stretch occupies residues 742–767 (RHKSGQQFKKPKDPTKRHNLFKKRYV). A Nuclear localization signal motif is present at residues 750-766 (KKPKDPTKRHNLFKKRY). The span at 758–767 (RHNLFKKRYV) shows a compositional bias: basic residues.

It belongs to the helicase family. RAD25/XPB subfamily. As to quaternary structure, component of the 7-subunit TFIIH core complex composed of XPB, XPD, TFB1/GTF2H1, GTF2H2/P44, TFB4/GTF2H3, TFB2/GTF2H4 and TFB5/GTF2H5, which is active in NER. The core complex associates with the 3-subunit CDK-activating kinase (CAK) module composed of CYCH1/cyclin H1, CDKD and MAT1/At4g30820 to form the 10-subunit holoenzyme (holo-TFIIH) active in transcription. As to expression, expressed ubiquitously.

The protein localises to the nucleus. It catalyses the reaction Couples ATP hydrolysis with the unwinding of duplex DNA by translocating in the 3'-5' direction.. The enzyme catalyses ATP + H2O = ADP + phosphate + H(+). In terms of biological role, ATP-dependent 3'-5' DNA helicase/translocase; binds dsDNA rather than ssDNA, unzipping it in a translocase rather than classical helicase activity. Component of the general transcription and DNA repair factor IIH (TFIIH) core complex. When complexed to CDK-activating kinase (CAK), involved in RNA transcription by RNA polymerase II. The ATPase activity of XPB/ERCC3, but not its helicase activity, is required for DNA opening; it may wrap around the damaged DNA wedging it open, causing localized melting and twisting that allows XPD/ERCC2 helicase to anchor. The ATP-dependent helicase activity of XPB/ERCC3 may be required for promoter escape. Also involved in transcription-coupled nucleotide excision repair (NER) of damaged DNA. In NER, TFIIH acts by opening DNA around the lesion to allow the excision of the damaged oligonucleotide and its replacement by a new DNA fragment. The structure of the TFIIH transcription complex differs from the NER-TFIIH complex. Partially complements UV sensitivity of a yeast SSL2 mutation. Required during the early stages of development, including seed germination. The protein is General transcription and DNA repair factor IIH helicase/translocase subunit XPB1 (XPB1) of Arabidopsis thaliana (Mouse-ear cress).